A 748-amino-acid polypeptide reads, in one-letter code: MELQRAQRNLKFLQNEDYVNVTDQTNLNGESQNAYSLGMETQVPEMQFSLSSDDDSISTQVKSVTAQKSPITQETTKNDTERNKDVDKSCNPVSTSQPDLGESNIEENIFINTQIQSRLDDAEEETNLKLKLEKFKYSFKSSNADDTHSNANVTAKRRPAIRKANSKLKTKPKTKRDPKIIKNITDFNINNYERSRTASLLKQLSGKHKKVLDIIKTQNEGNSDKPPRARNNKGEKATFDTYSEQEWKDIMKLLLQKFPQSEETDLNEVQKFLYGSEKSSSSLDNQESSQQRLWTASQLPPELPDEAIQPEQEERIRDTQSAVNFLSLSQVMDDKSEIMKDEESIIISRGDSTSSQEYGNGLEPQQPVGNVVGEDIELAVGTRINAFSLTDYKACKPMSVEVSRRCENSTDNDYDNISIVSDTTDETSTLFPLDQYRYVFIENDERPPLATDTIGSTQFFTPNTSPLDGIIDLTQESFKAVRSLISPLKVENNKTGVTSQASNQVQVPATRTPTIIPQKNLTTTLKTEEEKNNIGSSIRVKLLQESVVKLNPKLVKHNFYRVEANDSEEEDTEFDDQFCIADIQLVDSSKISTKDSTQNPTTSNDIIDTSAASSIASPEKFCEIMMSQSMKELRQSLKTVGLKPMRTKVEIIQSLQTASQILSTANPDNKGEHGGVANFSKIEIFDHLTELIEAFPDFLERIYTFEPIPLNELIEKLFSAEPFVSQIDEMTIREWADVQGICLRNDKK.

Residues 50–102 (LSSDDDSISTQVKSVTAQKSPITQETTKNDTERNKDVDKSCNPVSTSQPDLGE) form a disordered region. The span at 57-75 (ISTQVKSVTAQKSPITQET) shows a compositional bias: polar residues. Thr72 carries the phosphothreonine; by ATR and ATM modification. Residues 76–88 (TKNDTERNKDVDK) show a composition bias toward basic and acidic residues. Thr113 bears the Phosphothreonine; by ATR and ATM mark. 2 disordered regions span residues 215-236 (IKTQ…KGEK) and 277-303 (EKSS…PPEL). Over residues 222-236 (NSDKPPRARNNKGEK) the composition is skewed to basic and acidic residues. Over residues 277-291 (EKSSSSLDNQESSQQ) the composition is skewed to low complexity. At Ser289 the chain carries Phosphoserine; by ATR and ATM. Thr319 is subject to Phosphothreonine; by ATR and ATM. Phosphoserine; by ATR and ATM occurs at positions 329 and 355.

The protein belongs to the SLX4 family. In terms of assembly, forms a heterodimer with SLX1. Interacts with RAD1; catalytic subunit of the RAD1-RAD10 endonuclease. Interacts with RTT107. Phosphorylated by ATR (MEC1) and ATM (TEL1) upon DNA damage. This appears to be required for the function with the RAD1-RAD10 endonuclease.

It is found in the nucleus. The protein resides in the cytoplasm. Functionally, regulatory subunit that interacts with and increases the activity of different structure-specific endonucleases. Has several distinct roles in protecting genome stability by resolving diverse forms of deleterious DNA structures. Component of the SLX1-SLX4 structure-specific endonuclease that resolves DNA secondary structures generated during DNA repair and recombination. Has endonuclease activity towards branched DNA substrates, introducing single-strand cuts in duplex DNA close to junctions with ss-DNA. Has a preference for simple Y, 5'-flap and replication fork-like structures. It cleaves the strand bearing the 5'-non-homologous arm at the branch site junction and generates ligatable, nicked products from the 5'-flap or replication fork substrates. Plays a critical role in maintaining the integrity of the ribosomal DNA (rDNA) loci, where it has a role in re-starting stalled replication forks. Has Holliday junction resolvase activity in vitro. Interacts with the structure-specific RAD1-RAD10 endonuclease and promotes RAD1-RAD10-dependent 3'-non-homologous tail removal (NHTR) during repair of double-strand breaks by single-strand annealing. SLX4 also promotes recovery from DNA-alkylation-induced replisome stalling during DNA replication by facilitating the error-free mode of lesion bypass. This does not require SLX1 or RAD1-RAD10, but probably RTT107. The polypeptide is Structure-specific endonuclease subunit SLX4 (Saccharomyces cerevisiae (strain YJM789) (Baker's yeast)).